Reading from the N-terminus, the 179-residue chain is ATP synthase subunit b (179 aa).

The chain crosses the membrane as a helical span at residues 27-47; that stretch reads TAITFLVMLVVLGKFAWGPIV.

This sequence belongs to the ATPase B chain family. F-type ATPases have 2 components, F(1) - the catalytic core - and F(0) - the membrane proton channel. F(1) has five subunits: alpha(3), beta(3), gamma(1), delta(1), epsilon(1). F(0) has three main subunits: a(1), b(2) and c(10-14). The alpha and beta chains form an alternating ring which encloses part of the gamma chain. F(1) is attached to F(0) by a central stalk formed by the gamma and epsilon chains, while a peripheral stalk is formed by the delta and b chains.

It localises to the cell inner membrane. In terms of biological role, f(1)F(0) ATP synthase produces ATP from ADP in the presence of a proton or sodium gradient. F-type ATPases consist of two structural domains, F(1) containing the extramembraneous catalytic core and F(0) containing the membrane proton channel, linked together by a central stalk and a peripheral stalk. During catalysis, ATP synthesis in the catalytic domain of F(1) is coupled via a rotary mechanism of the central stalk subunits to proton translocation. Functionally, component of the F(0) channel, it forms part of the peripheral stalk, linking F(1) to F(0). The sequence is that of ATP synthase subunit b from Anaeromyxobacter sp. (strain K).